The chain runs to 92 residues: RNA-binding protein Hfq (92 aa).

Residues 9–68 (DPFLNALRRERVPVSIYLVNGIKLQGQVESFDQFVILLKNTVSQMVYKHAISTVVPSRPF) form the Sm domain.

This sequence belongs to the Hfq family. As to quaternary structure, homohexamer.

Its function is as follows. RNA chaperone that binds small regulatory RNA (sRNAs) and mRNAs to facilitate mRNA translational regulation in response to envelope stress, environmental stress and changes in metabolite concentrations. Also binds with high specificity to tRNAs. This is RNA-binding protein Hfq from Shewanella halifaxensis (strain HAW-EB4).